The chain runs to 251 residues: E3 ubiquitin-protein ligase MARCHF3 (251 aa).

Residues 61–121 (QSFNDRPMCR…ELCHFRFSVE (61 aa)) form an RING-CH-type zinc finger. The Zn(2+) site is built by cysteine 69, cysteine 72, cysteine 85, cysteine 87, histidine 95, cysteine 98, cysteine 111, and cysteine 114. A run of 2 helical transmembrane segments spans residues 143–163 (LFGDMVCFLFITPLATISGWL) and 180–200 (AVGLIALTVALFTIYLFWTLV).

It localises to the cytoplasmic vesicle membrane. The protein resides in the early endosome membrane. The catalysed reaction is S-ubiquitinyl-[E2 ubiquitin-conjugating enzyme]-L-cysteine + [acceptor protein]-L-lysine = [E2 ubiquitin-conjugating enzyme]-L-cysteine + N(6)-ubiquitinyl-[acceptor protein]-L-lysine.. It participates in protein modification; protein ubiquitination. Its function is as follows. E3 ubiquitin-protein ligase which may be involved in endosomal trafficking. E3 ubiquitin ligases accept ubiquitin from an E2 ubiquitin-conjugating enzyme in the form of a thioester and then directly transfer the ubiquitin to targeted substrates. This is E3 ubiquitin-protein ligase MARCHF3 (marchf3) from Xenopus tropicalis (Western clawed frog).